A 299-amino-acid polypeptide reads, in one-letter code: Recombination-associated protein RdgC (299 aa).

The protein belongs to the RdgC family.

It is found in the cytoplasm. It localises to the nucleoid. Its function is as follows. May be involved in recombination. The protein is Recombination-associated protein RdgC of Neisseria meningitidis serogroup A / serotype 4A (strain DSM 15465 / Z2491).